We begin with the raw amino-acid sequence, 631 residues long: Phosphomethylpyrimidine synthase (631 aa).

Substrate-binding positions include Asn-239, Met-268, Tyr-297, His-333, 353–355, 394–397, and Glu-433; these read SRG and DGLR. Zn(2+) is bound at residue His-437. Tyr-460 contributes to the substrate binding site. Residue His-501 participates in Zn(2+) binding. 3 residues coordinate [4Fe-4S] cluster: Cys-581, Cys-584, and Cys-589.

Belongs to the ThiC family. Homodimer. [4Fe-4S] cluster serves as cofactor.

It carries out the reaction 5-amino-1-(5-phospho-beta-D-ribosyl)imidazole + S-adenosyl-L-methionine = 4-amino-2-methyl-5-(phosphooxymethyl)pyrimidine + CO + 5'-deoxyadenosine + formate + L-methionine + 3 H(+). Its pathway is cofactor biosynthesis; thiamine diphosphate biosynthesis. Functionally, catalyzes the synthesis of the hydroxymethylpyrimidine phosphate (HMP-P) moiety of thiamine from aminoimidazole ribotide (AIR) in a radical S-adenosyl-L-methionine (SAM)-dependent reaction. The sequence is that of Phosphomethylpyrimidine synthase from Escherichia coli O157:H7.